Here is a 255-residue protein sequence, read N- to C-terminus: 3-deoxy-manno-octulosonate cytidylyltransferase (255 aa).

It belongs to the KdsB family.

Its subcellular location is the cytoplasm. It carries out the reaction 3-deoxy-alpha-D-manno-oct-2-ulosonate + CTP = CMP-3-deoxy-beta-D-manno-octulosonate + diphosphate. The protein operates within nucleotide-sugar biosynthesis; CMP-3-deoxy-D-manno-octulosonate biosynthesis; CMP-3-deoxy-D-manno-octulosonate from 3-deoxy-D-manno-octulosonate and CTP: step 1/1. It functions in the pathway bacterial outer membrane biogenesis; lipopolysaccharide biosynthesis. In terms of biological role, activates KDO (a required 8-carbon sugar) for incorporation into bacterial lipopolysaccharide in Gram-negative bacteria. The chain is 3-deoxy-manno-octulosonate cytidylyltransferase from Cellvibrio japonicus (strain Ueda107) (Pseudomonas fluorescens subsp. cellulosa).